The following is a 706-amino-acid chain: Triadin (706 aa).

Residues 1-28 (MTEITAEGNASTTTTVIDSKNGSVPKSP) are disordered. At 1-47 (MTEITAEGNASTTTTVIDSKNGSVPKSPGKVLKRTVTEDLVTTFSSP) the chain is on the cytoplasmic side. Residues 8 to 24 (GNASTTTTVIDSKNGSV) show a composition bias toward polar residues. Residues 48 to 68 (AAWLLVIALIITWSAVAVVMF) traverse the membrane as a helical segment. Topologically, residues 69–706 (DLVDYKNFSA…GKPNSPGPKQ (638 aa)) are lumenal. An N-linked (GlcNAc...) asparagine glycan is attached at Asn-75. The span at 117-127 (DGDEEDDEGDE) shows a compositional bias: acidic residues. Disordered regions lie at residues 117–265 (DGDE…EQKD), 281–663 (DLKP…KKQK), and 684–706 (FPVT…GPKQ). Composition is skewed to basic and acidic residues over residues 128–254 (DTAK…ESKE), 309–358 (PEEK…KSPD), 372–432 (TKKD…KEEV), 443–518 (AKKE…EVKP), 525–552 (IKKE…EKVL), 570–588 (KKAE…DKPK), and 599–621 (ESGK…RESH). Asn-625 carries an N-linked (GlcNAc...) asparagine glycan. The span at 628–651 (KAEKPARGSKEGFEDVPASKKAKE) shows a compositional bias: basic and acidic residues.

In terms of assembly, interacts with CASQ2. Homooligomer of variable subunit number; disulfide-linked. Interacts with CASQ1 and RYR1 in skeletal muscle. Post-translationally, phosphorylated by CaMK2. In terms of processing, N-glycosylated. Detected in skeletal muscle and in heart (at protein level). Detected in skeletal muscle and in heart.

The protein localises to the sarcoplasmic reticulum membrane. Contributes to the regulation of lumenal Ca2+ release via the sarcoplasmic reticulum calcium release channels RYR1 and RYR2, a key step in triggering skeletal and heart muscle contraction. Required for normal organization of the triad junction, where T-tubules and the sarcoplasmic reticulum terminal cisternae are in close contact. Required for normal skeletal muscle strength. Plays a role in excitation-contraction coupling in the heart and in regulating the rate of heart beats. This is Triadin (TRDN) from Oryctolagus cuniculus (Rabbit).